The sequence spans 228 residues: tRNA (carboxymethyluridine(34)-5-O)-methyltransferase (228 aa).

The protein localises to the cytoplasm. It localises to the nucleus. The catalysed reaction is 5-(carboxymethyl)uridine(34) in tRNA + S-adenosyl-L-methionine = 5-(2-methoxy-2-oxoethyl)uridine(34) in tRNA + S-adenosyl-L-homocysteine. Its function is as follows. Required for the methylation of the wobble bases at position 34 in tRNA. Appears to have a role in stress-response. This Schizosaccharomyces pombe (strain 972 / ATCC 24843) (Fission yeast) protein is tRNA (carboxymethyluridine(34)-5-O)-methyltransferase (trm9).